Here is an 81-residue protein sequence, read N- to C-terminus: CLAVATA3/ESR (CLE)-related protein 12 (81 aa).

The signal sequence occupies residues 1–31; sequence MENSNKVPISKIGLIMLMIFSTFFMSPHARR. Residues 55–67 show a composition bias toward basic and acidic residues; it reads KRSRTDLEDKAVP. The disordered stretch occupies residues 55-81; it reads KRSRTDLEDKAVPGDRLSPGGPNHIHN. Hydroxyproline is present on residues P73 and P76. O-linked (Ara...) hydroxyproline glycosylation is present at P76.

The protein belongs to the CLV3/ESR signal peptide family. The O-glycosylation (arabinosylation) of the hydroxyproline Pro-76 enhances binding affinity of the CLE12p peptide for its receptor. As to expression, expressed in young nodules throughout the central tissue. Expressed in the apical region of elongated nodules, corresponding to the meristematic and early infection zones.

Its subcellular location is the secreted. The protein resides in the extracellular space. Its function is as follows. Signaling peptide involved in the regulation of nodulation. Moves from root to shoot to function with the receptor kinase SUNN, in a signaling pathway that plays roles during cellular differentiation, both at the onset of nodulation, and later during nodule meristem development and subsequent homeostasis. Interacts with SUNN signaling to control nodule numbers. SUNN is involved in the autoregulation of nodulation (AON), a long distance systemic signaling from root to shoot and back again, which allows legumes to limit the number of root nodules formed based on available nitrogen and previous rhizobial colonization. The sequence is that of CLAVATA3/ESR (CLE)-related protein 12 from Medicago truncatula (Barrel medic).